We begin with the raw amino-acid sequence, 437 residues long: MSVITKIHARQIMDSRGNPTVEVDVYTESSFGRAAVPSGASTGVHEAVELRDNDKSVFLGKGVLKAVENVNTVINSALQGMDVTEQEEIDAKLLELDGTPNKSVLGANAILGVSLACAKAGAEYSALPLYRYIGGTTAKTLPVPMMNVLNGGAHADNTVDFQEFMIMPIGFERYSDALRCGAEVFHSLKALLHKRGLSTAVGDEGGFAPNVESNEQAIELVIEAIGLAGYKAGAPTDKGGLGDGHVMIALDPASSEFYDTEKKKYVFKKSSGRELSSEEMASYWADWASRYPIISIEDGMAEDDWEGWKLLTEKIGDRVQLVGDDLFVTNSKRLGEGIEKGVGNSILIKVNQIGTLTETLQAIDLAKRNGYTSVISHRSGETEDTTIAQIAVATNAGQIKTGSMSRSDRMAKYNELLRIEEMLGDTAVYPGIKAFRV.

Position 162 (Gln-162) interacts with (2R)-2-phosphoglycerate. Glu-204 (proton donor) is an active-site residue. 3 residues coordinate Mg(2+): Asp-251, Glu-297, and Asp-324. (2R)-2-phosphoglycerate is bound by residues Lys-349, Arg-378, Ser-379, and Lys-400. Catalysis depends on Lys-349, which acts as the Proton acceptor.

Belongs to the enolase family. Mg(2+) serves as cofactor.

Its subcellular location is the cytoplasm. The protein resides in the secreted. It localises to the cell surface. The catalysed reaction is (2R)-2-phosphoglycerate = phosphoenolpyruvate + H2O. It participates in carbohydrate degradation; glycolysis; pyruvate from D-glyceraldehyde 3-phosphate: step 4/5. Catalyzes the reversible conversion of 2-phosphoglycerate (2-PG) into phosphoenolpyruvate (PEP). It is essential for the degradation of carbohydrates via glycolysis. The polypeptide is Enolase (Chlorobaculum parvum (strain DSM 263 / NCIMB 8327) (Chlorobium vibrioforme subsp. thiosulfatophilum)).